Consider the following 248-residue polypeptide: Large ribosomal subunit protein uL30A (248 aa).

The disordered stretch occupies residues 1 to 44 (MSQKKQKIQVEQKVPENVAKKTQRDSKLRDAVAKRRTERLAANK). A compositionally biased stretch (basic and acidic residues) spans 8–41 (IQVEQKVPENVAKKTQRDSKLRDAVAKRRTERLA).

Belongs to the universal ribosomal protein uL30 family.

In terms of biological role, binds to G-rich structures in 28S rRNA and in mRNAs. Plays a regulatory role in the translation apparatus; inhibits cell-free translation of mRNAs. The polypeptide is Large ribosomal subunit protein uL30A (Rpl7-1) (Paramecium tetraurelia).